The following is an 804-amino-acid chain: Probable copper-exporting P-type ATPase (804 aa).

Topologically, residues 1–101 (MVKDTYISSA…VEHLSRMKRK (101 aa)) are cytoplasmic. The 67-residue stretch at 16-82 (MERTVRVTGM…VIEDLGYGVV (67 aa)) folds into the HMA 1 domain. Residues Cys27 and Cys30 each coordinate Cu(+). Residues 102 to 122 (LYVAAFAGVLLLFLAHFISLP) traverse the membrane as a helical segment. At 123 to 128 (YEDFVQ) the chain is on the extracellular side. Residues 129–149 (LLIALPAIFYSGSSIFKAAFS) form a helical membrane-spanning segment. The Cytoplasmic segment spans residues 150 to 159 (ALRRRTLNMD). A helical membrane pass occupies residues 160–180 (VMYSMGVGAAFLASVLSTAGV). The Extracellular portion of the chain corresponds to 181 to 186 (LPREYS). A helical membrane pass occupies residues 187–204 (FYETSVLLLAFLLLGRTL). At 205–339 (EARAKSRTGE…PIQRLADKVV (135 aa)) the chain is on the cytoplasmic side. The helical transmembrane segment at 340–360 (AYFIPTVLLVAISAFIYWYFI) threads the bilayer. Residues 361–364 (AHAP) are Extracellular-facing. A helical transmembrane segment spans residues 365-385 (LLFAFTTLIAVLVVACPCAFG). Topologically, residues 386 to 680 (LATPTALTVG…KIKQNIFWAL (295 aa)) are cytoplasmic. The active-site 4-aspartylphosphate intermediate is the Asp424. Residues 457 to 462 (ERRSEH) and 490 to 501 (GEGVVADGILVG) contribute to the ATP site. Residues Asp618 and Asp622 each contribute to the Mg(2+) site. The helical transmembrane segment at 681–701 (IYNVILIPAAAGLLYPIFGVV) threads the bilayer. Residues 702 to 704 (FRP) lie on the Extracellular side of the membrane. A helical membrane pass occupies residues 705–725 (EFAGLAMAMSSVSVVANSLLL). The Cytoplasmic segment spans residues 726–804 (RNYVPPIRRG…AAGYQAKLRS (79 aa)). The HMA 2 domain occupies 740-801 (EKIVLELSGL…AVEAAGYQAK (62 aa)). Cys751 and Cys754 together coordinate Cu(+).

This sequence belongs to the cation transport ATPase (P-type) (TC 3.A.3) family. Type IB subfamily. In terms of assembly, interacts with CopZ probably in the CopZ Cu(+)-bound form.

The protein localises to the cell membrane. It carries out the reaction Cu(+)(in) + ATP + H2O = Cu(+)(out) + ADP + phosphate + H(+). Activated by Cu(+) and Ag(+) and inhibited by vanadate. Activated by CopZ in its Cu(+)-bound form. Its function is as follows. Probably involved in copper and silver export. This is Probable copper-exporting P-type ATPase (copA) from Archaeoglobus fulgidus (strain ATCC 49558 / DSM 4304 / JCM 9628 / NBRC 100126 / VC-16).